A 506-amino-acid chain; its full sequence is Abscisic acid 8'-hydroxylase 2 (506 aa).

The helical transmembrane segment at 3-23 (FLLFFVFVTAAVLCFVVPAFL) threads the bilayer. Cys-437 is a heme binding site.

It belongs to the cytochrome P450 family. Heme serves as cofactor. In terms of tissue distribution, in internodes and expanding leaves. Weak expression in seedlings.

It is found in the membrane. The enzyme catalyses 2-cis-(+)-abscisate + reduced [NADPH--hemoprotein reductase] + O2 = (+)-8'-hydroxyabscisate + oxidized [NADPH--hemoprotein reductase] + H2O + H(+). It participates in plant hormone degradation; abscisic acid degradation. Functionally, involved in the oxidative degradation of abscisic acid. The polypeptide is Abscisic acid 8'-hydroxylase 2 (CYP707A6) (Oryza sativa subsp. indica (Rice)).